We begin with the raw amino-acid sequence, 572 residues long: Dihydroxy-acid dehydratase (572 aa).

Residue Cys-54 coordinates [2Fe-2S] cluster. Asp-86 provides a ligand contact to Mg(2+). Cys-127 is a [2Fe-2S] cluster binding site. Residues Asp-128 and Lys-129 each contribute to the Mg(2+) site. Position 129 is an N6-carboxylysine (Lys-129). [2Fe-2S] cluster is bound at residue Cys-199. Glu-449 provides a ligand contact to Mg(2+). Ser-475 acts as the Proton acceptor in catalysis.

This sequence belongs to the IlvD/Edd family. Homodimer. Requires [2Fe-2S] cluster as cofactor. Mg(2+) is required as a cofactor.

It carries out the reaction (2R)-2,3-dihydroxy-3-methylbutanoate = 3-methyl-2-oxobutanoate + H2O. It catalyses the reaction (2R,3R)-2,3-dihydroxy-3-methylpentanoate = (S)-3-methyl-2-oxopentanoate + H2O. It functions in the pathway amino-acid biosynthesis; L-isoleucine biosynthesis; L-isoleucine from 2-oxobutanoate: step 3/4. The protein operates within amino-acid biosynthesis; L-valine biosynthesis; L-valine from pyruvate: step 3/4. Its function is as follows. Functions in the biosynthesis of branched-chain amino acids. Catalyzes the dehydration of (2R,3R)-2,3-dihydroxy-3-methylpentanoate (2,3-dihydroxy-3-methylvalerate) into 2-oxo-3-methylpentanoate (2-oxo-3-methylvalerate) and of (2R)-2,3-dihydroxy-3-methylbutanoate (2,3-dihydroxyisovalerate) into 2-oxo-3-methylbutanoate (2-oxoisovalerate), the penultimate precursor to L-isoleucine and L-valine, respectively. The sequence is that of Dihydroxy-acid dehydratase from Pelagibacter ubique (strain HTCC1062).